The chain runs to 437 residues: Phosphomethylpyrimidine synthase (437 aa).

Substrate contacts are provided by residues Asn-69, Met-98, Tyr-127, His-163, 185–187 (SRG), 226–229 (DACR), and Glu-265. Position 269 (His-269) interacts with Zn(2+). Tyr-292 contributes to the substrate binding site. A Zn(2+)-binding site is contributed by His-333. Positions 409, 412, and 416 each coordinate [4Fe-4S] cluster.

This sequence belongs to the ThiC family. The cofactor is [4Fe-4S] cluster.

The catalysed reaction is 5-amino-1-(5-phospho-beta-D-ribosyl)imidazole + S-adenosyl-L-methionine = 4-amino-2-methyl-5-(phosphooxymethyl)pyrimidine + CO + 5'-deoxyadenosine + formate + L-methionine + 3 H(+). It participates in cofactor biosynthesis; thiamine diphosphate biosynthesis. In terms of biological role, catalyzes the synthesis of the hydroxymethylpyrimidine phosphate (HMP-P) moiety of thiamine from aminoimidazole ribotide (AIR) in a radical S-adenosyl-L-methionine (SAM)-dependent reaction. This is Phosphomethylpyrimidine synthase from Clostridium botulinum (strain Loch Maree / Type A3).